The primary structure comprises 151 residues: uncharacterized protein (151 aa).

The segment at 1–48 (MRMAPTESTEGRRLWPGPREGGSGKETTSEKLSNLPRPHSYSPKRADA) is disordered.

This is an uncharacterized protein from Homo sapiens (Human).